The primary structure comprises 335 residues: Thioredoxin-related transmembrane protein 4 (335 aa).

The first 20 residues, 1 to 20 (MTGGFCVPVLLAAWLAAAAA), serve as a signal peptide directing secretion. The Thioredoxin domain maps to 26–133 (AALPAEESRV…YEDLQNYILE (108 aa)). Residues C60 and C63 each act as nucleophile in the active site. Residues C60 and C63 are joined by a disulfide bond. The helical transmembrane segment at 186-206 (VFFVIATLVFGLFMGLILVVI) threads the bilayer. The tract at residues 222–316 (CEQEQSTGEA…EDGAHPADTQ (95 aa)) is disordered. Positions 238-280 (QDAEEEKDDSNEEENKDSLVDDEEEKEDIGDEDEGEEDEEEDN) are enriched in acidic residues. Phosphoserine is present on residues S247 and S255. Residues 286-298 (AEERSDTNERAVV) are compositionally biased toward basic and acidic residues.

It localises to the nucleus inner membrane. It is found in the endoplasmic reticulum membrane. The chain is Thioredoxin-related transmembrane protein 4 (Tmx4) from Mus musculus (Mouse).